The sequence spans 491 residues: Bifunctional protein GlmU (491 aa).

Positions 1 to 238 (MTTQPAVPAA…EWEIRGVNDR (238 aa)) are pyrophosphorylase. Residues 14 to 17 (LAAG), Lys28, Gln81, 86 to 87 (GT), 110 to 112 (YGD), Gly149, Glu163, Asn178, and Asn236 contribute to the UDP-N-acetyl-alpha-D-glucosamine site. Asp112 provides a ligand contact to Mg(2+). Asn236 contributes to the Mg(2+) binding site. The linker stretch occupies residues 239–259 (AQLADLAAEANRRTLRRWMLA). The interval 260-491 (GVTIADPATT…TASTDREIQP (232 aa)) is N-acetyltransferase. UDP-N-acetyl-alpha-D-glucosamine is bound by residues Arg341 and Lys359. His371 functions as the Proton acceptor in the catalytic mechanism. Tyr374 and Asn385 together coordinate UDP-N-acetyl-alpha-D-glucosamine. Acetyl-CoA-binding positions include Ala388, 394 to 395 (NY), Ser413, and Ala431. The interval 460–491 (AKRPGTPAAEAAQRANDESTGTTASTDREIQP) is disordered.

This sequence in the N-terminal section; belongs to the N-acetylglucosamine-1-phosphate uridyltransferase family. In the C-terminal section; belongs to the transferase hexapeptide repeat family. In terms of assembly, homotrimer. It depends on Mg(2+) as a cofactor.

The protein localises to the cytoplasm. It carries out the reaction alpha-D-glucosamine 1-phosphate + acetyl-CoA = N-acetyl-alpha-D-glucosamine 1-phosphate + CoA + H(+). The catalysed reaction is N-acetyl-alpha-D-glucosamine 1-phosphate + UTP + H(+) = UDP-N-acetyl-alpha-D-glucosamine + diphosphate. It functions in the pathway nucleotide-sugar biosynthesis; UDP-N-acetyl-alpha-D-glucosamine biosynthesis; N-acetyl-alpha-D-glucosamine 1-phosphate from alpha-D-glucosamine 6-phosphate (route II): step 2/2. The protein operates within nucleotide-sugar biosynthesis; UDP-N-acetyl-alpha-D-glucosamine biosynthesis; UDP-N-acetyl-alpha-D-glucosamine from N-acetyl-alpha-D-glucosamine 1-phosphate: step 1/1. It participates in bacterial outer membrane biogenesis; LPS lipid A biosynthesis. Catalyzes the last two sequential reactions in the de novo biosynthetic pathway for UDP-N-acetylglucosamine (UDP-GlcNAc). The C-terminal domain catalyzes the transfer of acetyl group from acetyl coenzyme A to glucosamine-1-phosphate (GlcN-1-P) to produce N-acetylglucosamine-1-phosphate (GlcNAc-1-P), which is converted into UDP-GlcNAc by the transfer of uridine 5-monophosphate (from uridine 5-triphosphate), a reaction catalyzed by the N-terminal domain. The chain is Bifunctional protein GlmU from Kineococcus radiotolerans (strain ATCC BAA-149 / DSM 14245 / SRS30216).